We begin with the raw amino-acid sequence, 272 residues long: Elongation factor Ts (272 aa).

The tract at residues Thr-76–Val-79 is involved in Mg(2+) ion dislocation from EF-Tu.

This sequence belongs to the EF-Ts family.

The protein resides in the cytoplasm. Associates with the EF-Tu.GDP complex and induces the exchange of GDP to GTP. It remains bound to the aminoacyl-tRNA.EF-Tu.GTP complex up to the GTP hydrolysis stage on the ribosome. This Corynebacterium urealyticum (strain ATCC 43042 / DSM 7109) protein is Elongation factor Ts.